Consider the following 292-residue polypeptide: MGDRPTPVPLPNSEQFYLENDRGEPYLIQVSWPLHWEDKQTGRGPLPIIYIVDGNALFLTATEAAWRRAAASHFAGGGIIVAIGYPLKGKLYDARRRSFDLTPPTACAPVGYGGADVFLDFIENSVRPAVQARFPQVSLAREALYGHSYGGLLALHALFTRPQSFDCYIASSPSIWWNSLCILHEAKAFVETKKVSHDQSPSLMVSWGSWEQHPPRWADELLDHYEARKRTAAELRMADNALDLCAMLHGCSRLHALIKTEYEGEDHTSVMSCSVSRGLTMFFEDWPFHQSG.

Arg-97, Ser-148, Tyr-149, Ser-174, Trp-176, and His-267 together coordinate triacetylfusarinine C.

The protein belongs to the esterase D family.

The protein localises to the cytoplasm. The catalysed reaction is triacetylfusarinine C + 3 H2O = 3 N-acetylfusarinine + Fe(3+). Its function is as follows. Displays specific triacetylfusarinine C (TAFC) esterase activity but does not hydrolyze fusarinine C, which has the same core structure as TAFC. Hydrolysis optimizes but is not essential for TAFC-mediated iron uptake. Both extra- and intracellular siderophores have been shown to be crucial for the virulence. Subsequent to chelation of iron and uptake, FsC and TAFC are hydrolyzed and the iron is transferred to the metabolism or to the intracellular siderophore ferricrocin (FC) for transport and storage of iron. Hydrolyzes both TAFC and DF-TAFC with equal efficiencies, suggesting that its function might not be restricted to the release of iron from the siderophore but might also include the degradation of the iron-free chelator to protect cells. The sequence is that of Siderophore triacetylfusarinine C esterase from Aspergillus fumigatus (strain ATCC MYA-4609 / CBS 101355 / FGSC A1100 / Af293) (Neosartorya fumigata).